The following is a 498-amino-acid chain: Cytochrome c-552 (498 aa).

The signal sequence occupies residues 1–31; it reads MKNKERKLKSWQGWLIFSSSMVVVFCLGLLA. His-119 contacts heme c. Heme is bound by residues Cys-148, Cys-151, and Lys-152. Residues Cys-186, Cys-189, His-190, Cys-228, Cys-231, and His-232 each contribute to the heme c site. Residues Glu-234, Tyr-235, Lys-280, and Gln-282 each coordinate Ca(2+). Substrate is bound at residue Tyr-235. His-283 contacts substrate. Heme c is bound by residues His-294, Cys-301, Cys-304, His-305, His-319, Cys-332, Cys-335, His-336, and His-411.

The protein belongs to the cytochrome c-552 family. The cofactor is Ca(2+). Heme c is required as a cofactor.

It is found in the periplasm. It carries out the reaction 6 Fe(III)-[cytochrome c] + NH4(+) + 2 H2O = 6 Fe(II)-[cytochrome c] + nitrite + 8 H(+). Its pathway is nitrogen metabolism; nitrate reduction (assimilation). In terms of biological role, catalyzes the reduction of nitrite to ammonia, consuming six electrons in the process. This chain is Cytochrome c-552, found in Porphyromonas gingivalis (strain ATCC BAA-308 / W83).